Reading from the N-terminus, the 132-residue chain is Interleukin-5 (132 aa).

The N-terminal stretch at 1–17 is a signal peptide; the sequence is MRLPLQLSILTLAWVWA. N-linked (GlcNAc...) asparagine glycosylation is found at N45, N74, and N88.

The protein belongs to the IL-5 family. In terms of assembly, homodimer; disulfide-linked. Interacts with IL5RA. Interacts with CSF2RB.

Its subcellular location is the secreted. In terms of biological role, homodimeric cytokine expressed predominantly by T-lymphocytes and NK cells that plays an important role in the survival, differentiation, and chemotaxis of eosinophils. Also acts on activated and resting B-cells to induce immunoglobulin production, growth, and differentiation. Mechanistically, exerts its biological effects through a receptor composed of IL5RA subunit and the cytokine receptor common subunit beta/CSF2RB. Binding to the receptor leads to activation of various kinases including LYN, SYK and JAK2 and thereby propagates signals through the RAS-MAPK and JAK-STAT5 pathways respectively. This is Interleukin-5 (IL5) from Meriones unguiculatus (Mongolian jird).